The following is a 333-amino-acid chain: DNA-directed RNA polymerase subunit alpha (333 aa).

The interval 1-235 is alpha N-terminal domain (alpha-NTD); sequence MQTNLLKPKA…EQLAVFAQLE (235 aa). Positions 253–333 are alpha C-terminal domain (alpha-CTD); sequence FDPILLRPVD…NWPPQGLDKR (81 aa).

This sequence belongs to the RNA polymerase alpha chain family. In terms of assembly, homodimer. The RNAP catalytic core consists of 2 alpha, 1 beta, 1 beta' and 1 omega subunit. When a sigma factor is associated with the core the holoenzyme is formed, which can initiate transcription.

It catalyses the reaction RNA(n) + a ribonucleoside 5'-triphosphate = RNA(n+1) + diphosphate. Its function is as follows. DNA-dependent RNA polymerase catalyzes the transcription of DNA into RNA using the four ribonucleoside triphosphates as substrates. The protein is DNA-directed RNA polymerase subunit alpha of Methylibium petroleiphilum (strain ATCC BAA-1232 / LMG 22953 / PM1).